Reading from the N-terminus, the 81-residue chain is NAD(P)H-quinone oxidoreductase subunit O (81 aa).

Belongs to the complex I NdhO subunit family. NDH-1 can be composed of about 15 different subunits; different subcomplexes with different compositions have been identified which probably have different functions.

It is found in the cellular thylakoid membrane. The catalysed reaction is a plastoquinone + NADH + (n+1) H(+)(in) = a plastoquinol + NAD(+) + n H(+)(out). The enzyme catalyses a plastoquinone + NADPH + (n+1) H(+)(in) = a plastoquinol + NADP(+) + n H(+)(out). In terms of biological role, NDH-1 shuttles electrons from an unknown electron donor, via FMN and iron-sulfur (Fe-S) centers, to quinones in the respiratory and/or the photosynthetic chain. The immediate electron acceptor for the enzyme in this species is believed to be plastoquinone. Couples the redox reaction to proton translocation, and thus conserves the redox energy in a proton gradient. Cyanobacterial NDH-1 also plays a role in inorganic carbon-concentration. The protein is NAD(P)H-quinone oxidoreductase subunit O of Prochlorococcus marinus (strain MIT 9303).